Consider the following 472-residue polypeptide: Chromosomal replication initiator protein DnaA (472 aa).

The tract at residues 1-80 is domain I, interacts with DnaA modulators; that stretch reads MDTKQIWFTT…YQVNVRVIIS (80 aa). A domain II region spans residues 80-130; sequence SSATPAPSEPVAVTPSEPSPTTEVAEPSFASFNQAAPMLNQLPLGDPNRSS. Residues 131 to 347 form a domain III, AAA+ region region; it reads VLNPRYTFSS…GCLNRVIAYA (217 aa). ATP is bound by residues glycine 175, glycine 177, lysine 178, and threonine 179. The domain IV, binds dsDNA stretch occupies residues 348–472; the sequence is NLNRTPVTVE…RQRLYGENAR (125 aa).

Belongs to the DnaA family. As to quaternary structure, oligomerizes as a right-handed, spiral filament on DNA at oriC.

It is found in the cytoplasm. Its function is as follows. Plays an essential role in the initiation and regulation of chromosomal replication. ATP-DnaA binds to the origin of replication (oriC) to initiate formation of the DNA replication initiation complex once per cell cycle. Binds the DnaA box (a 9 base pair repeat at the origin) and separates the double-stranded (ds)DNA. Forms a right-handed helical filament on oriC DNA; dsDNA binds to the exterior of the filament while single-stranded (ss)DNA is stabiized in the filament's interior. The ATP-DnaA-oriC complex binds and stabilizes one strand of the AT-rich DNA unwinding element (DUE), permitting loading of DNA polymerase. After initiation quickly degrades to an ADP-DnaA complex that is not apt for DNA replication. Binds acidic phospholipids. The protein is Chromosomal replication initiator protein DnaA of Herpetosiphon aurantiacus (strain ATCC 23779 / DSM 785 / 114-95).